Reading from the N-terminus, the 207-residue chain is Large ribosomal subunit protein uL4 (207 aa).

A disordered region spans residues 49–77 (HAVKNRSAVRGGGKKPWRQKGTGRARQGS). The span at 60–71 (GGKKPWRQKGTG) shows a compositional bias: basic residues.

This sequence belongs to the universal ribosomal protein uL4 family. In terms of assembly, part of the 50S ribosomal subunit.

Functionally, one of the primary rRNA binding proteins, this protein initially binds near the 5'-end of the 23S rRNA. It is important during the early stages of 50S assembly. It makes multiple contacts with different domains of the 23S rRNA in the assembled 50S subunit and ribosome. Its function is as follows. Forms part of the polypeptide exit tunnel. The chain is Large ribosomal subunit protein uL4 from Levilactobacillus brevis (strain ATCC 367 / BCRC 12310 / CIP 105137 / JCM 1170 / LMG 11437 / NCIMB 947 / NCTC 947) (Lactobacillus brevis).